Here is a 294-residue protein sequence, read N- to C-terminus: Indole-3-glycerol phosphate synthase (294 aa).

Belongs to the TrpC family.

The enzyme catalyses 1-(2-carboxyphenylamino)-1-deoxy-D-ribulose 5-phosphate + H(+) = (1S,2R)-1-C-(indol-3-yl)glycerol 3-phosphate + CO2 + H2O. It functions in the pathway amino-acid biosynthesis; L-tryptophan biosynthesis; L-tryptophan from chorismate: step 4/5. The polypeptide is Indole-3-glycerol phosphate synthase (Synechococcus sp. (strain RCC307)).